The following is a 406-amino-acid chain: Sensor histidine kinase YxjM (406 aa).

Residues 1–13 (MNGQTPARHYYKK) are Cytoplasmic-facing. A helical membrane pass occupies residues 14-34 (LVPSLILILNCIQFLSHPTKA). Residues 35–36 (DP) are Extracellular-facing. A helical transmembrane segment spans residues 37–57 (ILLAFVFAVYLAFIWIIPYVA). S58 is a topological domain (cytoplasmic). 2 helical membrane-spanning segments follow: residues 59-79 (TAVS…FWAV) and 80-100 (SGQE…YAAF). R101 is a topological domain (cytoplasmic). Residues 102-122 (LPSRLSLIFTACLIGGNILLL) form a helical membrane-spanning segment. Residues 123-125 (SSQ) lie on the Extracellular side of the membrane. The helical transmembrane segment at 126-146 (GGSLNTIISNISIMLGLYVLF) threads the bilayer. Over 147-406 (SSMRFRREAR…TNKEQKDEQR (260 aa)) the chain is Cytoplasmic. The Histidine kinase domain occupies 209-396 (DIHDSIGHEL…KIELSLPLMT (188 aa)). Position 211 is a phosphohistidine; by autocatalysis (H211).

The protein localises to the cell membrane. It carries out the reaction ATP + protein L-histidine = ADP + protein N-phospho-L-histidine.. Functionally, probable member of the two-component regulatory system YxjM/YxjL. May activate YxjL by phosphorylation. The chain is Sensor histidine kinase YxjM (yxjM) from Bacillus subtilis (strain 168).